A 226-amino-acid chain; its full sequence is ATP synthase F(0) complex subunit a (226 aa).

6 helical membrane passes run 12–32 (PTMM…ILFP), 68–88 (WALM…LGLL), 97–117 (QLSM…ITGF), 138–158 (IPML…ALAV), 164–184 (ITAG…LMDI), and 189–209 (AFIT…VALI).

This sequence belongs to the ATPase A chain family. Component of the ATP synthase complex composed at least of ATP5F1A/subunit alpha, ATP5F1B/subunit beta, ATP5MC1/subunit c (homooctomer), MT-ATP6/subunit a, MT-ATP8/subunit 8, ATP5ME/subunit e, ATP5MF/subunit f, ATP5MG/subunit g, ATP5MK/subunit k, ATP5MJ/subunit j, ATP5F1C/subunit gamma, ATP5F1D/subunit delta, ATP5F1E/subunit epsilon, ATP5PF/subunit F6, ATP5PB/subunit b, ATP5PD/subunit d, ATP5PO/subunit OSCP. ATP synthase complex consists of a soluble F(1) head domain (subunits alpha(3) and beta(3)) - the catalytic core - and a membrane F(0) domain - the membrane proton channel (subunits c, a, 8, e, f, g, k and j). These two domains are linked by a central stalk (subunits gamma, delta, and epsilon) rotating inside the F1 region and a stationary peripheral stalk (subunits F6, b, d, and OSCP). Interacts with DNAJC30; interaction is direct.

Its subcellular location is the mitochondrion inner membrane. It carries out the reaction H(+)(in) = H(+)(out). Subunit a, of the mitochondrial membrane ATP synthase complex (F(1)F(0) ATP synthase or Complex V) that produces ATP from ADP in the presence of a proton gradient across the membrane which is generated by electron transport complexes of the respiratory chain. ATP synthase complex consist of a soluble F(1) head domain - the catalytic core - and a membrane F(1) domain - the membrane proton channel. These two domains are linked by a central stalk rotating inside the F(1) region and a stationary peripheral stalk. During catalysis, ATP synthesis in the catalytic domain of F(1) is coupled via a rotary mechanism of the central stalk subunits to proton translocation. With the subunit c (ATP5MC1), forms the proton-conducting channel in the F(0) domain, that contains two crucial half-channels (inlet and outlet) that facilitate proton movement from the mitochondrial intermembrane space (IMS) into the matrix. Protons are taken up via the inlet half-channel and released through the outlet half-channel, following a Grotthuss mechanism. In Phoca vitulina (Harbor seal), this protein is ATP synthase F(0) complex subunit a.